A 90-amino-acid chain; its full sequence is UPF0223 protein lwe1035 (90 aa).

This sequence belongs to the UPF0223 family.

In Listeria welshimeri serovar 6b (strain ATCC 35897 / DSM 20650 / CCUG 15529 / CIP 8149 / NCTC 11857 / SLCC 5334 / V8), this protein is UPF0223 protein lwe1035.